Here is a 1201-residue protein sequence, read N- to C-terminus: DNA-directed RNA polymerase subunit beta' (1201 aa).

The Zn(2+) site is built by Cys60, Cys62, Cys75, and Cys78. The Mg(2+) site is built by Asp449, Asp451, and Asp453. Residues Cys818, Cys892, Cys899, and Cys902 each coordinate Zn(2+).

This sequence belongs to the RNA polymerase beta' chain family. The RNAP catalytic core consists of 2 alpha, 1 beta, 1 beta' and 1 omega subunit. When a sigma factor is associated with the core the holoenzyme is formed, which can initiate transcription. Mg(2+) is required as a cofactor. Requires Zn(2+) as cofactor.

It carries out the reaction RNA(n) + a ribonucleoside 5'-triphosphate = RNA(n+1) + diphosphate. In terms of biological role, DNA-dependent RNA polymerase catalyzes the transcription of DNA into RNA using the four ribonucleoside triphosphates as substrates. The protein is DNA-directed RNA polymerase subunit beta' of Listeria innocua serovar 6a (strain ATCC BAA-680 / CLIP 11262).